Consider the following 218-residue polypeptide: Ras-related protein R-Ras (218 aa).

The tract at residues 1–30 is disordered; that stretch reads MSSGAASGTGRGRPRGGGPGPRDPPPGETH. Gly residues predominate over residues 7-20; it reads SGTGRGRPRGGGPG. 36–44 is a GTP binding site; the sequence is GGGGVGKSA. The Effector region signature appears at 58–66; it reads YDPTIEDSY. GTP is bound by residues 83 to 87, 142 to 145, and 172 to 174; these read DTAGQ, NKAD, and SAK. Cys-215 bears the Cysteine methyl ester mark. Residue Cys-215 is the site of S-geranylgeranyl cysteine attachment. A propeptide spans 216–218 (removed in mature form); the sequence is VLL.

This sequence belongs to the small GTPase superfamily. Ras family. In terms of assembly, interacts with PLCE1. Interacts (active GTP-bound form preferentially) with RGS14. Interacts with OSBPL3. Interacts with ZDHHC19. In terms of processing, S-palmitoylated by ZDHHC19, leading to increased association with membranes and with rafts/caveolae as well as enhanced cell viability.

The protein localises to the cell membrane. The catalysed reaction is GTP + H2O = GDP + phosphate + H(+). In terms of biological role, GTP-binding protein with GTPase activity, likely involved in the regulation of MAPK signaling pathway and thereby controlling multiple cellular processes. Regulates the organization of the actin cytoskeleton. With OSPBL3, modulates integrin beta-1 (ITGB1) activity. The sequence is that of Ras-related protein R-Ras (Rras) from Mus musculus (Mouse).